The primary structure comprises 327 residues: Fructose-1,6-bisphosphatase class 1 (327 aa).

The Mg(2+) site is built by E84, D103, L105, and D106. Substrate is bound by residues 106–109, N198, and K264; that span reads DGSS. Position 270 (E270) interacts with Mg(2+).

This sequence belongs to the FBPase class 1 family. Homotetramer. Requires Mg(2+) as cofactor.

It is found in the cytoplasm. The enzyme catalyses beta-D-fructose 1,6-bisphosphate + H2O = beta-D-fructose 6-phosphate + phosphate. It participates in carbohydrate biosynthesis; gluconeogenesis. This is Fructose-1,6-bisphosphatase class 1 from Psychrobacter cryohalolentis (strain ATCC BAA-1226 / DSM 17306 / VKM B-2378 / K5).